The following is a 109-amino-acid chain: Spermidine export protein MdtI (109 aa).

The next 4 membrane-spanning stretches (helical) occupy residues 6 to 26, 36 to 56, 64 to 84, and 88 to 108; these read WIHA…NVFL, WFGL…SQAV, AYAL…WVLF, and LNRK…MIKL.

The protein belongs to the drug/metabolite transporter (DMT) superfamily. Small multidrug resistance (SMR) (TC 2.A.7.1) family. MdtI subfamily. Forms a complex with MdtJ.

It localises to the cell inner membrane. Its function is as follows. Catalyzes the excretion of spermidine. This chain is Spermidine export protein MdtI, found in Enterobacter sp. (strain 638).